Here is a 547-residue protein sequence, read N- to C-terminus: Natural resistance-associated macrophage protein 1 (547 aa).

The segment at 1–30 (MTGDKDPQSVSRPNYGSISHPPSSEPQQEP) is disordered. Residues 1–54 (MTGDKDPQSVSRPNYGSISHPPSSEPQQEPLRTTYLSEKIPIPDTEPGTFSLRK) are Cytoplasmic-facing. A compositionally biased stretch (polar residues) spans 8-17 (QSVSRPNYGS). Residues 21-30 (PPSSEPQQEP) are compositionally biased toward low complexity. A helical transmembrane segment spans residues 55–75 (LWAFTGPGFLMSIAFLDPGNI). The Extracellular segment spans residues 76–81 (ESDLQA). Residues 82-102 (GAVAGFKLLWVLLWATVLGLL) traverse the membrane as a helical segment. The Cytoplasmic portion of the chain corresponds to 103–139 (CQRLAARLGVVTGKDLGEICHLYYPKVPRTLLWLTIE). Residues 140-160 (LAIVGSDMQEVIGTAIAFSLL) traverse the membrane as a helical segment. Topologically, residues 161 to 164 (SAGR) are extracellular. The helical transmembrane segment at 165–185 (IPLWGGVLITIVDTFFFLFLD) threads the bilayer. At 186–193 (NYGLRKLE) the chain is on the cytoplasmic side. Residues 194–214 (AFFGILITIMALTFGYEYVVA) form a helical membrane-spanning segment. Topologically, residues 215–240 (RPAQVALLQGLLLPSCPGCGRPELLQ) are extracellular. A helical transmembrane segment spans residues 241–261 (AVGIVGAIIMPHNIYLHSALV). Residues 262-286 (KSREIDRSRRPDIREANMYFLIEAS) lie on the Cytoplasmic side of the membrane. The chain crosses the membrane as a helical span at residues 287–307 (IALSVSFFINLFVVAVFGQAF). The Extracellular portion of the chain corresponds to 308–346 (YQQTNEAAFNVCANSSLHDYAKIFPRNNLTVEVDIYQGG). Asparagine 321 and asparagine 335 each carry an N-linked (GlcNAc...) asparagine glycan. Residues 347-367 (VMLGCVFGPAALYIWAVGLLA) form a helical membrane-spanning segment. The Cytoplasmic segment spans residues 368-394 (AGQSSTMTGTYAGQFVMEGFLRLRWSR). The helical transmembrane segment at 395–415 (FARVLLTRSCAILPTVLVVVF) threads the bilayer. The Extracellular segment spans residues 416-432 (RDLKDLSGLNDLLNVLQ). A helical membrane pass occupies residues 433 to 453 (SLLLPFAVLPILTFTSMPALM). The Cytoplasmic portion of the chain corresponds to 454 to 464 (QEFANGRLSKA). Residues 465-485 (ITSFIMALVCAINLYFVVIYL) form a helical membrane-spanning segment. The Extracellular segment spans residues 486–492 (PSLPHPA). Residues 493–513 (YFILVALLAIVYLGLTTYLVW) traverse the membrane as a helical segment. Topologically, residues 514–547 (TCFIAHGVTLLAHSSHQHFLYGLPDVEEKGKISG) are cytoplasmic.

This sequence belongs to the NRAMP family.

The protein localises to the late endosome membrane. The protein resides in the lysosome membrane. The catalysed reaction is Zn(2+)(in) + H(+)(out) = Zn(2+)(out) + H(+)(in). The enzyme catalyses Fe(2+)(in) + H(+)(out) = Fe(2+)(out) + H(+)(in). It catalyses the reaction Mn(2+)(in) + H(+)(out) = Mn(2+)(out) + H(+)(in). Macrophage-specific antiporter that fluxes metal ions in either direction against a proton gradient. Localized to late endosomal lysosomal membranes, delivers bivalent cations from the cytosol into these acidic compartments where they may directly affect antimicrobial activity. Involved in iron metabolism and host natural resistance to infection with intracellular parasites. Pathogen resistance involves sequestration of Fe(2+) and Mn(2+), cofactors of both prokaryotic and eukaryotic catalases and superoxide dismutases, not only to protect the macrophage against its own generation of reactive oxygen species, but to deny the cations to the pathogen for synthesis of its protective enzymes. The polypeptide is Natural resistance-associated macrophage protein 1 (SLC11A1) (Canis lupus familiaris (Dog)).